A 117-amino-acid chain; its full sequence is Large ribosomal subunit protein eL22 (117 aa).

A phosphoserine mark is found at Ser49 and Ser50.

Belongs to the eukaryotic ribosomal protein eL22 family. In terms of assembly, component of the large ribosomal subunit (LSU). Mature yeast ribosomes consist of a small (40S) and a large (60S) subunit. The 40S small subunit contains 1 molecule of ribosomal RNA (18S rRNA) and at least 33 different proteins. The large 60S subunit contains 3 rRNA molecules (25S, 5.8S and 5S rRNA) and at least 46 different proteins.

The protein localises to the cytoplasm. It is found in the nucleus. Its subcellular location is the nucleolus. Its function is as follows. Component of the ribosome, a large ribonucleoprotein complex responsible for the synthesis of proteins in the cell. The small ribosomal subunit (SSU) binds messenger RNAs (mRNAs) and translates the encoded message by selecting cognate aminoacyl-transfer RNA (tRNA) molecules. The large subunit (LSU) contains the ribosomal catalytic site termed the peptidyl transferase center (PTC), which catalyzes the formation of peptide bonds, thereby polymerizing the amino acids delivered by tRNAs into a polypeptide chain. The nascent polypeptides leave the ribosome through a tunnel in the LSU and interact with protein factors that function in enzymatic processing, targeting, and the membrane insertion of nascent chains at the exit of the ribosomal tunnel. This Schizosaccharomyces pombe (strain 972 / ATCC 24843) (Fission yeast) protein is Large ribosomal subunit protein eL22 (rpl22).